A 100-amino-acid chain; its full sequence is Large ribosomal subunit protein eL21 (100 aa).

The segment covering 1–21 (MVKRTHGYRYKSRKLLRKKPR) has biased composition (basic residues). Residues 1–22 (MVKRTHGYRYKSRKLLRKKPRE) form a disordered region.

This sequence belongs to the eukaryotic ribosomal protein eL21 family.

This is Large ribosomal subunit protein eL21 from Pyrobaculum neutrophilum (strain DSM 2338 / JCM 9278 / NBRC 100436 / V24Sta) (Thermoproteus neutrophilus).